A 492-amino-acid polypeptide reads, in one-letter code: ATP synthase subunit beta, chloroplastic (492 aa).

170–177 serves as a coordination point for ATP; sequence GGAGVGKT.

Belongs to the ATPase alpha/beta chains family. As to quaternary structure, F-type ATPases have 2 components, CF(1) - the catalytic core - and CF(0) - the membrane proton channel. CF(1) has five subunits: alpha(3), beta(3), gamma(1), delta(1), epsilon(1). CF(0) has four main subunits: a(1), b(1), b'(1) and c(9-12).

It localises to the plastid. Its subcellular location is the chloroplast thylakoid membrane. It catalyses the reaction ATP + H2O + 4 H(+)(in) = ADP + phosphate + 5 H(+)(out). Functionally, produces ATP from ADP in the presence of a proton gradient across the membrane. The catalytic sites are hosted primarily by the beta subunits. This is ATP synthase subunit beta, chloroplastic from Anthoceros angustus (Hornwort).